Reading from the N-terminus, the 485-residue chain is NADH-quinone oxidoreductase subunit N (485 aa).

The next 14 membrane-spanning stretches (helical) occupy residues 8–28 (LIAL…MLSI), 35–55 (FLNA…LWFV), 71–91 (GFAM…CTFA), 105–125 (FYLL…ANHL), 127–147 (SLFL…GYAF), 159–179 (YTIL…LVYA), 203–223 (LLAG…LVPF), 235–255 (PAPV…GVVM), 271–291 (VVLA…ALSQ), 297–317 (LLGY…IALQ), 326–346 (VGVY…VVSL), 373–393 (AAVM…LGFI), 408–430 (WWLV…RVAV), and 455–475 (IVVL…QPLI).

This sequence belongs to the complex I subunit 2 family. NDH-1 is composed of 13 different subunits. Subunits NuoA, H, J, K, L, M, N constitute the membrane sector of the complex.

The protein localises to the cell inner membrane. It carries out the reaction a quinone + NADH + 5 H(+)(in) = a quinol + NAD(+) + 4 H(+)(out). In terms of biological role, NDH-1 shuttles electrons from NADH, via FMN and iron-sulfur (Fe-S) centers, to quinones in the respiratory chain. The immediate electron acceptor for the enzyme in this species is believed to be ubiquinone. Couples the redox reaction to proton translocation (for every two electrons transferred, four hydrogen ions are translocated across the cytoplasmic membrane), and thus conserves the redox energy in a proton gradient. The chain is NADH-quinone oxidoreductase subunit N from Escherichia coli O81 (strain ED1a).